A 351-amino-acid polypeptide reads, in one-letter code: Secreted frizzled-related sequence protein 4 (351 aa).

Residues 1 to 18 (MLRSILVALCLWLRLALG) form the signal peptide. The region spanning 19–139 (VRGAPCEAVR…VYDRGVCISP (121 aa)) is the FZ domain. 5 disulfide bridges follow: cysteine 24–cysteine 85, cysteine 32–cysteine 78, cysteine 69–cysteine 108, cysteine 97–cysteine 136, and cysteine 101–cysteine 125. Asparagine 38 and asparagine 68 each carry an N-linked (GlcNAc...) asparagine glycan. Residues asparagine 116, asparagine 194, and asparagine 240 are each glycosylated (N-linked (GlcNAc...) asparagine). The NTR domain occupies 178 to 306 (CKCKKVKPTL…TIQDKKQIAS (129 aa)). Residues 293–303 (EQQRTIQDKKQ) show a composition bias toward basic and acidic residues. The disordered stretch occupies residues 293–351 (EQQRTIQDKKQIASRTSRTSRSNPPKSKGRPPAPKPASPKKNIKARSAPKKSNLKKSAS). Low complexity predominate over residues 306–318 (SRTSRTSRSNPPK). The segment covering 333 to 351 (KNIKARSAPKKSNLKKSAS) has biased composition (basic residues).

It belongs to the secreted frizzled-related protein (sFRP) family. In terms of tissue distribution, expressed in the ovary. Localized to granulosa cells of periovulatory follicles and corpora lutea. Weakly expressed in adult tissues including kidney, brain and lung.

Its subcellular location is the secreted. Soluble frizzled-related proteins (sFRPS) function as modulators of Wnt signaling through direct interaction with Wnts. They have a role in regulating cell growth and differentiation in specific cell types. SFRP4 plays a role in bone morphogenesis. May also act as a regulator of adult uterine morphology and function. May also increase apoptosis during ovulation possibly through modulation of FZ1/FZ4/WNT4 signaling. Has phosphaturic effects by specifically inhibiting sodium-dependent phosphate uptake. The polypeptide is Secreted frizzled-related sequence protein 4 (Sfrp4) (Mus musculus (Mouse)).